The sequence spans 284 residues: Tropomyosin alpha-3 chain (284 aa).

Position 1 is an N-acetylmethionine (methionine 1). The segment at 1-40 is disordered; that stretch reads MEAIKKKMQMLKLDKENALDRAEQAEAEQKQAEERSKQLE. A coiled-coil region spans residues 1–284; sequence MEAIKKKMQM…DHALNDMTSI (284 aa). Residues 12–40 are compositionally biased toward basic and acidic residues; sequence KLDKENALDRAEQAEAEQKQAEERSKQLE. Phosphothreonine is present on threonine 53. 2 positions are modified to phosphoserine: serine 61 and serine 87. Phosphothreonine occurs at positions 108 and 252. Position 261 is a phosphotyrosine (tyrosine 261). A Phosphoserine modification is found at serine 271. A Phosphothreonine modification is found at threonine 282. At serine 283 the chain carries Phosphoserine.

The protein belongs to the tropomyosin family. In terms of assembly, homodimer. Heterodimer of an alpha (TPM1, TPM3 or TPM4) and a beta (TPM2) chain. Interacts with TMOD1. Interacts with TNNT1.

The protein resides in the cytoplasm. It localises to the cytoskeleton. In terms of biological role, binds to actin filaments in muscle and non-muscle cells. Plays a central role, in association with the troponin complex, in the calcium dependent regulation of vertebrate striated muscle contraction. Smooth muscle contraction is regulated by interaction with caldesmon. In non-muscle cells is implicated in stabilizing cytoskeleton actin filaments. The chain is Tropomyosin alpha-3 chain (TPM3) from Sus scrofa (Pig).